The following is a 621-amino-acid chain: Chaperone protein HtpG (621 aa).

Residues 1–328 are a; substrate-binding; the sequence is MKQEKKKFDA…SEDLPLNISR (328 aa). The b stretch occupies residues 329 to 544; that stretch reads ESLQHNNVLE…EAAMDIRMER (216 aa). Residues 478 to 498 are disordered; the sequence is DVDQATSSSEEKNKDDKKSDD. A compositionally biased stretch (basic and acidic residues) spans 486–498; the sequence is SEEKNKDDKKSDD. The interval 545–621 is c; the sequence is FLIEQKQIAN…LNDIVQKAIL (77 aa).

The protein belongs to the heat shock protein 90 family. As to quaternary structure, homodimer.

Its subcellular location is the cytoplasm. Functionally, molecular chaperone. Has ATPase activity. The chain is Chaperone protein HtpG from Rickettsia bellii (strain RML369-C).